A 112-amino-acid chain; its full sequence is C-C motif chemokine 27 (112 aa).

The N-terminal stretch at 1 to 24 (MKGPPTFCSLLLLSLLLSPDPTAA) is a signal peptide. Disulfide bonds link Cys33–Cys62 and Cys34–Cys77.

The protein belongs to the intercrine beta (chemokine CC) family. Monomer, dimer, and tetramer. Heparin avidly promotes oligomerization. Interacts with TNFAIP6 (via Link domain). In terms of tissue distribution, testis, thymus, placenta, ovary and skin.

It is found in the secreted. In terms of biological role, chemotactic factor that attracts skin-associated memory T-lymphocytes. May play a role in mediating homing of lymphocytes to cutaneous sites. Binds to CCR10. This is C-C motif chemokine 27 (CCL27) from Homo sapiens (Human).